Consider the following 924-residue polypeptide: Bifunctional glutamine synthetase adenylyltransferase/adenylyl-removing enzyme (924 aa).

The tract at residues Met-1–Val-422 is adenylyl removase. Positions Ser-424 to Glu-924 are adenylyl transferase.

It belongs to the GlnE family. Mg(2+) is required as a cofactor.

It carries out the reaction [glutamine synthetase]-O(4)-(5'-adenylyl)-L-tyrosine + phosphate = [glutamine synthetase]-L-tyrosine + ADP. The enzyme catalyses [glutamine synthetase]-L-tyrosine + ATP = [glutamine synthetase]-O(4)-(5'-adenylyl)-L-tyrosine + diphosphate. Its function is as follows. Involved in the regulation of glutamine synthetase GlnA, a key enzyme in the process to assimilate ammonia. When cellular nitrogen levels are high, the C-terminal adenylyl transferase (AT) inactivates GlnA by covalent transfer of an adenylyl group from ATP to specific tyrosine residue of GlnA, thus reducing its activity. Conversely, when nitrogen levels are low, the N-terminal adenylyl removase (AR) activates GlnA by removing the adenylyl group by phosphorolysis, increasing its activity. The regulatory region of GlnE binds the signal transduction protein PII (GlnB) which indicates the nitrogen status of the cell. The chain is Bifunctional glutamine synthetase adenylyltransferase/adenylyl-removing enzyme from Acinetobacter baylyi (strain ATCC 33305 / BD413 / ADP1).